We begin with the raw amino-acid sequence, 199 residues long: Putative acetyltransferase SAV2555 (199 aa).

The protein belongs to the transferase hexapeptide repeat family.

This is Putative acetyltransferase SAV2555 from Staphylococcus aureus (strain Mu50 / ATCC 700699).